Here is a 684-residue protein sequence, read N- to C-terminus: ATP-dependent DNA helicase RecG (684 aa).

Positions 51-148 (RHIASMATLQ…ADVPQFQAPH (98 aa)) are wedge domain. Residues 278–439 (DLARHRPMRR…VHADLEVSVI (162 aa)) form the Helicase ATP-binding domain. Position 291 to 298 (291 to 298 (GDVGSGKT)) interacts with ATP. Residues 392 to 395 (DEQH) carry the DEAH box motif.

It belongs to the helicase family. RecG subfamily. As to quaternary structure, monomer.

It carries out the reaction Couples ATP hydrolysis with the unwinding of duplex DNA by translocating in the 3'-5' direction.. The catalysed reaction is ATP + H2O = ADP + phosphate + H(+). Plays a critical role in recombination and DNA repair. Helps process Holliday junction intermediates to mature products by catalyzing branch migration. Has replication fork regression activity, unwinds stalled or blocked replication forks to make a HJ that can be resolved. Has a DNA unwinding activity characteristic of a DNA helicase with 3'-5' polarity. The chain is ATP-dependent DNA helicase RecG from Acidithiobacillus ferridurans.